The primary structure comprises 161 residues: MSEKNLKQTVEERALALLEPIVAGEGLELVDLEFLREREGWVLRLFIDKPGGRVGLDECTQVSRAVDPSLDVEDFIPHEYNLEVSSPGVDRPLRKPTHFERVKGQQVKVKTFGPVGEPPRKNFTGTLTEVAGDGISVEVEGAGTFHILFKDIAKANLEFQF.

Belongs to the RimP family.

Its subcellular location is the cytoplasm. Required for maturation of 30S ribosomal subunits. The protein is Ribosome maturation factor RimP of Myxococcus xanthus (strain DK1622).